The following is a 445-amino-acid chain: Inward rectifier potassium channel 4 (445 aa).

The Cytoplasmic portion of the chain corresponds to 1 to 55 (MHGHNRNGQAHVPRRKRRNRFVKKNGQCNVYFANLSNKSQRYMADIFTTCVDTRW). A helical membrane pass occupies residues 56-80 (RYMLMIFSAAFLVSWLFFGLLFWWI). Over 81–119 (AFFHGDLEASPSVPAVGGPGGNGGESPNAPKPCIMHVNG) the chain is Extracellular. The segment at residues 120 to 131 (FLGAFLFSVETQ) is an intramembrane region (helical; Pore-forming). Positions 132 to 138 (TTIGYGF) form an intramembrane region, pore-forming. The Selectivity filter motif lies at 133–138 (TIGYGF). Topologically, residues 139–147 (RCVTEECPL) are extracellular. Residues 148-169 (AVIAVVVQSIVGCVIDSFMIGT) form a helical membrane-spanning segment. Residues 170 to 445 (IMAKMARPKK…NISYRRESRI (276 aa)) lie on the Cytoplasmic side of the membrane. Positions 443–445 (SRI) match the PDZ-binding motif.

This sequence belongs to the inward rectifier-type potassium channel (TC 1.A.2.1) family. KCNJ4 subfamily. In terms of assembly, homomultimeric and heteromultimeric association with KCNJ2 and KCNJ12. Interacts with DLG2 and DLG4. Associates, via its PDZ-recognition domain, with a complex containing LIN7A, LIN7B, LIN7C, DLG1, CASK and APBA1. Interacts with TAX1BP3. TAX1BP3 competes with LIN7 family members for KCNJ4 binding. In terms of tissue distribution, highly expressed in the forebrain, moderately in skeletal muscle. Im olfactory bulb, specifically expressed at the postsynaptic membrane of dendritic spines of granule cells.

It localises to the cell membrane. It is found in the postsynaptic cell membrane. The protein resides in the cytoplasmic vesicle membrane. It carries out the reaction K(+)(in) = K(+)(out). Its function is as follows. Inward rectifier potassium channels are characterized by a greater tendency to allow potassium to flow into the cell rather than out of it. Their voltage dependence is regulated by the concentration of extracellular potassium; as external potassium is raised, the voltage range of the channel opening shifts to more positive voltages. The inward rectification is mainly due to the blockage of outward current by internal magnesium. Can be blocked by extracellular barium and cesium. This is Inward rectifier potassium channel 4 (Kcnj4) from Mus musculus (Mouse).